The following is a 483-amino-acid chain: Cobyric acid synthase (483 aa).

In terms of domain architecture, GATase cobBQ-type spans 251 to 438 (ALIVAVPMLP…LHGVFSADRF (188 aa)). C333 acts as the Nucleophile in catalysis. Residue H430 is part of the active site.

The protein belongs to the CobB/CobQ family. CobQ subfamily.

Its pathway is cofactor biosynthesis; adenosylcobalamin biosynthesis. In terms of biological role, catalyzes amidations at positions B, D, E, and G on adenosylcobyrinic A,C-diamide. NH(2) groups are provided by glutamine, and one molecule of ATP is hydrogenolyzed for each amidation. The chain is Cobyric acid synthase from Brucella canis (strain ATCC 23365 / NCTC 10854 / RM-666).